We begin with the raw amino-acid sequence, 201 residues long: Large ribosomal subunit protein uL4 (201 aa).

The segment at Arg44–Ala68 is disordered.

It belongs to the universal ribosomal protein uL4 family. Part of the 50S ribosomal subunit.

One of the primary rRNA binding proteins, this protein initially binds near the 5'-end of the 23S rRNA. It is important during the early stages of 50S assembly. It makes multiple contacts with different domains of the 23S rRNA in the assembled 50S subunit and ribosome. Its function is as follows. Forms part of the polypeptide exit tunnel. The protein is Large ribosomal subunit protein uL4 of Buchnera aphidicola subsp. Schizaphis graminum (strain Sg).